A 320-amino-acid chain; its full sequence is Cytochrome f (320 aa).

The signal sequence occupies residues 1 to 35 (MENKNTFSWVKEQMTRSISVSIMIYVITQTSISNA). 4 residues coordinate heme: Y36, C56, C59, and H60. The chain crosses the membrane as a helical span at residues 286–306 (VQGLLFFFASVILAQVFLVLK).

The protein belongs to the cytochrome f family. The 4 large subunits of the cytochrome b6-f complex are cytochrome b6, subunit IV (17 kDa polypeptide, petD), cytochrome f and the Rieske protein, while the 4 small subunits are PetG, PetL, PetM and PetN. The complex functions as a dimer. It depends on heme as a cofactor.

It localises to the plastid. Its subcellular location is the chloroplast thylakoid membrane. Functionally, component of the cytochrome b6-f complex, which mediates electron transfer between photosystem II (PSII) and photosystem I (PSI), cyclic electron flow around PSI, and state transitions. This chain is Cytochrome f, found in Lolium perenne (Perennial ryegrass).